Consider the following 112-residue polypeptide: Large ribosomal subunit protein P1w (112 aa).

The segment at 85–112 is disordered; sequence AAAPAAEEKKKDEPAEESDGDLGFGLFD. At Ser-102 the chain carries Phosphoserine.

The protein belongs to the eukaryotic ribosomal protein P1/P2 family. In terms of assembly, P1 and P2 exist as dimers at the large ribosomal subunit.

In terms of biological role, plays an important role in the elongation step of protein synthesis. In Arabidopsis thaliana (Mouse-ear cress), this protein is Large ribosomal subunit protein P1w (RPP1A).